Here is an 84-residue protein sequence, read N- to C-terminus: Small ribosomal subunit protein bS16 (84 aa).

The protein belongs to the bacterial ribosomal protein bS16 family.

The sequence is that of Small ribosomal subunit protein bS16 from Deinococcus radiodurans (strain ATCC 13939 / DSM 20539 / JCM 16871 / CCUG 27074 / LMG 4051 / NBRC 15346 / NCIMB 9279 / VKM B-1422 / R1).